The following is a 276-amino-acid chain: F-actin-capping protein subunit alpha (276 aa).

This sequence belongs to the F-actin-capping protein alpha subunit family. Heterodimer of an alpha and a beta subunit.

The protein localises to the cytoplasm. Its subcellular location is the cytoskeleton. Its function is as follows. F-actin-capping proteins bind in a Ca(2+)-independent manner to the fast growing ends of actin filaments (barbed end) thereby blocking the exchange of subunits at these ends. Unlike other capping proteins (such as gelsolin and severin), these proteins do not sever actin filaments. The sequence is that of F-actin-capping protein subunit alpha (cap1) from Aspergillus fumigatus (strain ATCC MYA-4609 / CBS 101355 / FGSC A1100 / Af293) (Neosartorya fumigata).